The following is a 233-amino-acid chain: Orotidine 5'-phosphate decarboxylase (233 aa).

Substrate contacts are provided by residues aspartate 11, lysine 34, 61 to 70, threonine 117, arginine 179, glutamine 188, glycine 208, and arginine 209; that span reads DLKLHDIPNT. The active-site Proton donor is lysine 63.

The protein belongs to the OMP decarboxylase family. Type 1 subfamily. Homodimer.

The catalysed reaction is orotidine 5'-phosphate + H(+) = UMP + CO2. Its pathway is pyrimidine metabolism; UMP biosynthesis via de novo pathway; UMP from orotate: step 2/2. Functionally, catalyzes the decarboxylation of orotidine 5'-monophosphate (OMP) to uridine 5'-monophosphate (UMP). This chain is Orotidine 5'-phosphate decarboxylase, found in Streptococcus pneumoniae (strain CGSP14).